The chain runs to 291 residues: ATP synthase subunit a (291 aa).

The next 6 membrane-spanning stretches (helical) occupy residues 50-70, 108-128, 161-181, 203-223, 241-261, and 262-282; these read LDSM…FWIV, IAPL…MDLI, DPNI…FYSI, PVAK…TFLA, LIFI…SVPW, and AIFH…LTIV.

It belongs to the ATPase A chain family. F-type ATPases have 2 components, CF(1) - the catalytic core - and CF(0) - the membrane proton channel. CF(1) has five subunits: alpha(3), beta(3), gamma(1), delta(1), epsilon(1). CF(0) has three main subunits: a(1), b(2) and c(9-12). The alpha and beta chains form an alternating ring which encloses part of the gamma chain. CF(1) is attached to CF(0) by a central stalk formed by the gamma and epsilon chains, while a peripheral stalk is formed by the delta and b chains.

Its subcellular location is the cell inner membrane. In terms of biological role, key component of the proton channel; it plays a direct role in the translocation of protons across the membrane. This is ATP synthase subunit a from Acinetobacter baumannii (strain SDF).